The primary structure comprises 639 residues: Sodium-dependent phosphate transport protein 2A (639 aa).

At 1-103 (MISYGENLGG…LRRAGVTLLK (103 aa)) the chain is on the cytoplasmic side. Serine 14 and serine 34 each carry phosphoserine. A helical membrane pass occupies residues 104-125 (VPLMLSFLYLFVCSLDVLSSAF). At 126–145 (QLAGGKVAGDIFKDNAILSN) the chain is on the extracellular side. The chain crosses the membrane as a helical span at residues 146 to 163 (PVAGLVVGILVTVLVQSS). Topologically, residues 164–165 (ST) are cytoplasmic. A helical transmembrane segment spans residues 166-185 (STSIVVSMVSSGLLEVSSAI). The Extracellular portion of the chain corresponds to 186–347 (PIIMGSNIGT…HIFVDTGLPD (162 aa)). Disulfide bonds link cysteine 225/cysteine 522 and cysteine 306/cysteine 336. Asparagine 298, asparagine 323, and asparagine 330 each carry an N-linked (GlcNAc...) asparagine glycan. Residues 348–370 (LAVGLILLAGSLALLCTCLILLV) form a helical membrane-spanning segment. The Cytoplasmic segment spans residues 371 to 412 (KMLNSLLKGQVAKVIQKVINTDFPTPFTWATGYFAMVVGASM). Residues 413–436 (TFVVQSSSVFTSAITPLIGLGVIS) form a helical membrane-spanning segment. Residues 437-466 (IERAYPLTLGSNIGTTTTAILAALASPREK) are Extracellular-facing. Residues 467–487 (LSSAFQIALCHFFFNISGILL) form a helical membrane-spanning segment. The Cytoplasmic segment spans residues 488–513 (WYPVPCTRLPIRMAKALGKRTAKYRW). Threonine 508 carries the phosphothreonine; by PKC modification. The chain crosses the membrane as a helical span at residues 514 to 534 (FAVLYLLLCFLLLPSMVFGLS). Residues 535–539 (MAGWR) are Extracellular-facing. Residues 540 to 561 (AMVGVGAPFGALLAFVVLVSAL) form a helical membrane-spanning segment. Over 562–639 (QHRSPGCLPK…MPHHHDATRL (78 aa)) the chain is Cytoplasmic. Serine 607 is subject to Phosphoserine. Threonine 623 is subject to Phosphothreonine. Serine 625 carries the phosphoserine modification.

It belongs to the SLC34A transporter family. In terms of assembly, interacts via its C-terminal region with NHERF4. Interacts with NHERF1. Interacts with TMEM174; regulates SLC34A1 internalization by PTH and FGF23.

Its subcellular location is the apical cell membrane. It localises to the cell membrane. It catalyses the reaction 3 Na(+)(out) + phosphate(out) = 3 Na(+)(in) + phosphate(in). Functionally, involved in actively transporting phosphate into cells via Na(+) cotransport in the renal brush border membrane. The cotransport has a Na(+):Pi stoichiometry of 3:1 and is electrogenic. The polypeptide is Sodium-dependent phosphate transport protein 2A (Ovis aries (Sheep)).